The sequence spans 45 residues: Keratin-associated protein 22-2 (45 aa).

It belongs to the KRTAP type 20 family. Interacts with hair keratins.

Its function is as follows. In the hair cortex, hair keratin intermediate filaments are embedded in an interfilamentous matrix, consisting of hair keratin-associated proteins (KRTAP), which are essential for the formation of a rigid and resistant hair shaft through their extensive disulfide bond cross-linking with abundant cysteine residues of hair keratins. The matrix proteins include the high-sulfur and high-glycine-tyrosine keratins. The polypeptide is Keratin-associated protein 22-2 (KRTAP22-2) (Homo sapiens (Human)).